The primary structure comprises 326 residues: Malate dehydrogenase (326 aa).

Gly12–Ala18 serves as a coordination point for NAD(+). Residues Arg93 and Arg99 each contribute to the substrate site. NAD(+) is bound by residues Asn106, Gln113, and Val130–Asn132. Positions 132 and 163 each coordinate substrate. Residue His188 is the Proton acceptor of the active site.

It belongs to the LDH/MDH superfamily. MDH type 2 family.

It catalyses the reaction (S)-malate + NAD(+) = oxaloacetate + NADH + H(+). Catalyzes the reversible oxidation of malate to oxaloacetate. In Chlamydia muridarum (strain MoPn / Nigg), this protein is Malate dehydrogenase.